We begin with the raw amino-acid sequence, 395 residues long: Protein phosphatase PP2A regulatory subunit A (395 aa).

HEAT repeat units follow at residues 44–81 (DCLA…AVGP), 83–120 (STKT…ILSP), 122–159 (LAIQ…VLGK), 161–198 (ATIE…VIGI), 200–237 (LLSQ…QLGV), 239–276 (FFDD…EEFG), 279–316 (WAMQ…VLGS), and 318–355 (ITST…IVDE).

Belongs to the phosphatase 2A regulatory subunit A family. In terms of assembly, PP2A exists in several trimeric forms, all of which consist of a core composed of a catalytic subunit associated with a 65 kDa regulatory subunit (PR65) (subunit A). The core complex associates with a third, variable subunit (subunit B), which confers distinct properties to the holoenzyme.

In terms of biological role, the PR65 subunit of protein phosphatase 2A serves as a scaffolding molecule to coordinate the assembly of the catalytic subunit and a variable regulatory B subunit. In Pisum sativum (Garden pea), this protein is Protein phosphatase PP2A regulatory subunit A.